Consider the following 80-residue polypeptide: U20-ctenitoxin-Pn1a (80 aa).

Intrachain disulfides connect C3/C20, C10/C26, C17/C52, C19/C40, C28/C38, C58/C71, and C75/C80.

In terms of tissue distribution, expressed by the venom gland.

The protein localises to the secreted. Its function is as follows. Omega-agatoxin are antagonists of voltage-gated calcium channels (Cav). Induces rapid general flaccid paralysis followed by death when injected into the cerebral ventricle of mice at dose levels of 3 ug per mouse. This is U20-ctenitoxin-Pn1a from Phoneutria nigriventer (Brazilian armed spider).